Consider the following 421-residue polypeptide: Transcription factor rglT (421 aa).

The disordered stretch occupies residues 1 to 29 (MQYEAYQWGQSHPTSTSGSMLQDTPTAAS). Residues 8–29 (WGQSHPTSTSGSMLQDTPTAAS) show a composition bias toward polar residues. Residues 38 to 65 (CDECRKRKLKCSGEISGCSRCIKQSLSC) constitute a DNA-binding region (zn(2)-C6 fungal-type). The span at 346 to 357 (EARQRRWHESPD) shows a compositional bias: basic and acidic residues. The interval 346–371 (EARQRRWHESPDSHPLPPDQRLNIPS) is disordered.

The protein resides in the nucleus. Its function is as follows. Transcription factor that is important for oxidative stress resistance and essential for gliotoxin (GT) self-protection through the regulation of a gene encoding a putative gliT homolog, even if E.nidulans does not produce gliotoxin itself. The sequence is that of Transcription factor rglT from Emericella nidulans (strain FGSC A4 / ATCC 38163 / CBS 112.46 / NRRL 194 / M139) (Aspergillus nidulans).